Here is a 321-residue protein sequence, read N- to C-terminus: tRNA uridine(34) hydroxylase (321 aa).

The 99-residue stretch at 135 to 233 (DDPLTLVIDT…YLEEVPENES (99 aa)) folds into the Rhodanese domain. C193 serves as the catalytic Cysteine persulfide intermediate.

This sequence belongs to the TrhO family.

The catalysed reaction is uridine(34) in tRNA + AH2 + O2 = 5-hydroxyuridine(34) in tRNA + A + H2O. Catalyzes oxygen-dependent 5-hydroxyuridine (ho5U) modification at position 34 in tRNAs. The polypeptide is tRNA uridine(34) hydroxylase (Prochlorococcus marinus (strain SARG / CCMP1375 / SS120)).